Here is a 142-residue protein sequence, read N- to C-terminus: HTH-type transcriptional regulator MntR (142 aa).

In terms of domain architecture, HTH dtxR-type spans 1 to 63 (MTTPSMEDYI…YEKYRGLVLT (63 aa)). Mn(2+) is bound by residues D8, E11, H77, E99, E102, and H103.

This sequence belongs to the DtxR/MntR family. Homodimer.

It localises to the cytoplasm. DNA binding is strongly activated by Mn(2+). Its function is as follows. Central regulator of manganese homeostasis. This Bacillus velezensis (strain DSM 23117 / BGSC 10A6 / LMG 26770 / FZB42) (Bacillus amyloliquefaciens subsp. plantarum) protein is HTH-type transcriptional regulator MntR.